Here is a 634-residue protein sequence, read N- to C-terminus: Extracellular metalloproteinase MEP (634 aa).

Residues 1–18 form the signal peptide; it reads MRGLLLAGALALPASVFA. Positions 19 to 245 are excised as a propeptide; that stretch reads HPAHQSYGLN…IHGVVDYVAE (227 aa). Residue H429 participates in Zn(2+) binding. E430 is a catalytic residue. H433 is a binding site for Zn(2+).

It belongs to the peptidase M36 family. It depends on Zn(2+) as a cofactor.

The protein resides in the secreted. Functionally, secreted metalloproteinase that allows assimilation of proteinaceous substrates and probably acts as a virulence factor. In Neosartorya fischeri (strain ATCC 1020 / DSM 3700 / CBS 544.65 / FGSC A1164 / JCM 1740 / NRRL 181 / WB 181) (Aspergillus fischerianus), this protein is Extracellular metalloproteinase MEP (MEP).